A 154-amino-acid polypeptide reads, in one-letter code: Large ribosomal subunit protein uL13 (154 aa).

Residues 129-154 are disordered; sequence SQHPHEAQQPEALDVGTLNRKNKRIA.

The protein belongs to the universal ribosomal protein uL13 family. In terms of assembly, part of the 50S ribosomal subunit.

This protein is one of the early assembly proteins of the 50S ribosomal subunit, although it is not seen to bind rRNA by itself. It is important during the early stages of 50S assembly. This is Large ribosomal subunit protein uL13 from Bartonella bacilliformis (strain ATCC 35685 / KC583 / Herrer 020/F12,63).